Here is a 248-residue protein sequence, read N- to C-terminus: MIEYRIEEAIARYREYYEFKPARESAGIEDVRSAIEHTNLKPFATPDDIKKLCLEARENRFYGVCVNPCYVKLAREELEGTDVKVVTVVGFPLGANETRTKAHEAIFAVESGADEIDMVINVGMLKAKEWEYVYEDIRSVVESVKGKVVKVIIETCYLDTEEKIAACVISKLAGAHFVKTSTGFGTGGATAEDVHLMKWIVGDEMGVKASGGIRTFEDAVKMIMYGADRIGTSSGVKIVQGGEERYGG.

Asp-117 (proton donor/acceptor) is an active-site residue. Lys-179 acts as the Schiff-base intermediate with acetaldehyde in catalysis. The active-site Proton donor/acceptor is Lys-208.

Belongs to the DeoC/FbaB aldolase family. DeoC type 1 subfamily.

It is found in the cytoplasm. It catalyses the reaction 2-deoxy-D-ribose 5-phosphate = D-glyceraldehyde 3-phosphate + acetaldehyde. Its pathway is carbohydrate degradation; 2-deoxy-D-ribose 1-phosphate degradation; D-glyceraldehyde 3-phosphate and acetaldehyde from 2-deoxy-alpha-D-ribose 1-phosphate: step 2/2. Functionally, catalyzes a reversible aldol reaction between acetaldehyde and D-glyceraldehyde 3-phosphate to generate 2-deoxy-D-ribose 5-phosphate. The polypeptide is Deoxyribose-phosphate aldolase (Thermotoga petrophila (strain ATCC BAA-488 / DSM 13995 / JCM 10881 / RKU-1)).